The sequence spans 594 residues: Arginine--tRNA ligase (594 aa).

Residues 139-149 (ANPTGPLHVGH) carry the 'HIGH' region motif.

This sequence belongs to the class-I aminoacyl-tRNA synthetase family. In terms of assembly, monomer.

The protein localises to the cytoplasm. The catalysed reaction is tRNA(Arg) + L-arginine + ATP = L-arginyl-tRNA(Arg) + AMP + diphosphate. The chain is Arginine--tRNA ligase from Paraburkholderia phymatum (strain DSM 17167 / CIP 108236 / LMG 21445 / STM815) (Burkholderia phymatum).